The sequence spans 142 residues: Small ribosomal subunit protein uS12 (142 aa).

Belongs to the universal ribosomal protein uS12 family. As to quaternary structure, part of the 30S ribosomal subunit.

Functionally, with S4 and S5 plays an important role in translational accuracy. Located at the interface of the 30S and 50S subunits. The sequence is that of Small ribosomal subunit protein uS12 from Methanosarcina barkeri (strain Fusaro / DSM 804).